An 877-amino-acid polypeptide reads, in one-letter code: Putative leucine-rich repeat receptor-like serine/threonine-protein kinase At2g19230 (877 aa).

An N-terminal signal peptide occupies residues 1 to 24; sequence MGNFNFLPLVSFASFVVVLVLVCA. The Extracellular segment spans residues 25–517; the sequence is QDQSGFVSID…RNKKTERKEY (493 aa). 6 N-linked (GlcNAc...) asparagine glycosylation sites follow: N142, N233, N261, N295, N405, and N420. 2 LRR repeats span residues 439 to 462 and 463 to 484; these read PLQKLDLSNNRLTGTVPDFLANLP and DLTELNLEENKLTGILPEKLLE. Residues 518–538 form a helical membrane-spanning segment; that stretch reads IIPSVASVTGLFFLLLALISF. At 539–877 the chain is on the cytoplasmic side; it reads WQFKKRQQSV…VDPGVLPQPR (339 aa). One can recognise a Protein kinase domain in the interval 569–842; sequence NNFERVLGQG…QVVAELKESL (274 aa). ATP is bound by residues 575–583 and K596; that span reads LGQGGFGKV. Y641 carries the post-translational modification Phosphotyrosine. Catalysis depends on D692, which acts as the Proton acceptor. S726 is modified (phosphoserine). 2 positions are modified to phosphothreonine: T727 and T732.

This sequence belongs to the protein kinase superfamily. Ser/Thr protein kinase family.

It is found in the cell membrane. The catalysed reaction is L-seryl-[protein] + ATP = O-phospho-L-seryl-[protein] + ADP + H(+). The enzyme catalyses L-threonyl-[protein] + ATP = O-phospho-L-threonyl-[protein] + ADP + H(+). The protein is Putative leucine-rich repeat receptor-like serine/threonine-protein kinase At2g19230 of Arabidopsis thaliana (Mouse-ear cress).